The following is a 278-amino-acid chain: Acyl-[acyl-carrier-protein]--UDP-N-acetylglucosamine O-acyltransferase (278 aa).

The protein belongs to the transferase hexapeptide repeat family. LpxA subfamily. Homotrimer.

Its subcellular location is the cytoplasm. It catalyses the reaction a (3R)-hydroxyacyl-[ACP] + UDP-N-acetyl-alpha-D-glucosamine = a UDP-3-O-[(3R)-3-hydroxyacyl]-N-acetyl-alpha-D-glucosamine + holo-[ACP]. It functions in the pathway glycolipid biosynthesis; lipid IV(A) biosynthesis; lipid IV(A) from (3R)-3-hydroxytetradecanoyl-[acyl-carrier-protein] and UDP-N-acetyl-alpha-D-glucosamine: step 1/6. Involved in the biosynthesis of lipid A, a phosphorylated glycolipid that anchors the lipopolysaccharide to the outer membrane of the cell. The polypeptide is Acyl-[acyl-carrier-protein]--UDP-N-acetylglucosamine O-acyltransferase (Brucella abortus (strain S19)).